The primary structure comprises 585 residues: DNA ligase (585 aa).

Glu278 lines the ATP pocket. Lys280 (N6-AMP-lysine intermediate) is an active-site residue. ATP contacts are provided by Arg285, Arg301, Glu330, Phe370, Arg444, and Lys450.

Belongs to the ATP-dependent DNA ligase family. The cofactor is Mg(2+).

The enzyme catalyses ATP + (deoxyribonucleotide)n-3'-hydroxyl + 5'-phospho-(deoxyribonucleotide)m = (deoxyribonucleotide)n+m + AMP + diphosphate.. In terms of biological role, DNA ligase that seals nicks in double-stranded DNA during DNA replication, DNA recombination and DNA repair. The chain is DNA ligase from Haloferax volcanii (strain ATCC 29605 / DSM 3757 / JCM 8879 / NBRC 14742 / NCIMB 2012 / VKM B-1768 / DS2) (Halobacterium volcanii).